The following is a 126-amino-acid chain: Cell cycle protein GpsB (126 aa).

Residues 35-72 are a coiled coil; it reads LDLVIKDYQTYQENIDRLTADNTRLFNKVEELNRQLSA.

The protein belongs to the GpsB family. Forms polymers through the coiled coil domains. Interacts with PBP1, MreC and EzrA.

It localises to the cytoplasm. In terms of biological role, divisome component that associates with the complex late in its assembly, after the Z-ring is formed, and is dependent on DivIC and PBP2B for its recruitment to the divisome. Together with EzrA, is a key component of the system that regulates PBP1 localization during cell cycle progression. Its main role could be the removal of PBP1 from the cell pole after pole maturation is completed. Also contributes to the recruitment of PBP1 to the division complex. Not essential for septum formation. This is Cell cycle protein GpsB from Latilactobacillus sakei subsp. sakei (strain 23K) (Lactobacillus sakei subsp. sakei).